The following is a 205-amino-acid chain: Small ribosomal subunit protein uS3 (205 aa).

Positions 12 to 80 (VRQFLAKELA…PAQINIAEVR (69 aa)) constitute a KH type-2 domain.

Belongs to the universal ribosomal protein uS3 family. Part of the 30S ribosomal subunit. Forms a tight complex with proteins S10 and S14.

Functionally, binds the lower part of the 30S subunit head. Binds mRNA in the 70S ribosome, positioning it for translation. This chain is Small ribosomal subunit protein uS3, found in Buchnera aphidicola subsp. Acyrthosiphon kondoi (Acyrthosiphon kondoi symbiotic bacterium).